Here is a 127-residue protein sequence, read N- to C-terminus: Translation initiation factor 5A (127 aa).

Residue Lys-35 is modified to Hypusine.

It belongs to the eIF-5A family.

The protein resides in the cytoplasm. Its function is as follows. Functions by promoting the formation of the first peptide bond. This chain is Translation initiation factor 5A, found in Methanococcoides burtonii (strain DSM 6242 / NBRC 107633 / OCM 468 / ACE-M).